The chain runs to 329 residues: NADH-quinone oxidoreductase subunit H (329 aa).

8 helical membrane passes run Ile9–Val29, Ile79–Pro99, Val117–Gly137, Val162–Ile182, Gly188–Ala208, Phe243–Phe263, Leu269–Phe289, and Trp309–Leu329.

The protein belongs to the complex I subunit 1 family. In terms of assembly, NDH-1 is composed of 14 different subunits. Subunits NuoA, H, J, K, L, M, N constitute the membrane sector of the complex.

Its subcellular location is the cell inner membrane. It catalyses the reaction a quinone + NADH + 5 H(+)(in) = a quinol + NAD(+) + 4 H(+)(out). Its function is as follows. NDH-1 shuttles electrons from NADH, via FMN and iron-sulfur (Fe-S) centers, to quinones in the respiratory chain. The immediate electron acceptor for the enzyme in this species is believed to be ubiquinone. Couples the redox reaction to proton translocation (for every two electrons transferred, four hydrogen ions are translocated across the cytoplasmic membrane), and thus conserves the redox energy in a proton gradient. This subunit may bind ubiquinone. This Wolinella succinogenes (strain ATCC 29543 / DSM 1740 / CCUG 13145 / JCM 31913 / LMG 7466 / NCTC 11488 / FDC 602W) (Vibrio succinogenes) protein is NADH-quinone oxidoreductase subunit H.